Reading from the N-terminus, the 552-residue chain is Phosphoribosylaminoimidazole carboxylase (552 aa).

Residues 108–295 (KQHLQVFKIA…QFEAHLRAIC (188 aa)) enclose the ATP-grasp domain. 134 to 189 (GQEFGYPFVLKSKTLAYDGRGNYVVHQPSEIPTAIKALGDRPLYVEKFVPFSMEIA) is an ATP binding site.

It in the C-terminal section; belongs to the AIR carboxylase family. Class I subfamily.

It catalyses the reaction 5-amino-1-(5-phospho-D-ribosyl)imidazole-4-carboxylate + H(+) = 5-amino-1-(5-phospho-beta-D-ribosyl)imidazole + CO2. It functions in the pathway purine metabolism; IMP biosynthesis via de novo pathway; 5-amino-1-(5-phospho-D-ribosyl)imidazole-4-carboxylate from 5-amino-1-(5-phospho-D-ribosyl)imidazole (carboxylase route): step 1/1. The protein is Phosphoribosylaminoimidazole carboxylase (ade6) of Schizosaccharomyces pombe (strain 972 / ATCC 24843) (Fission yeast).